Here is a 265-residue protein sequence, read N- to C-terminus: Hydroxyethylthiazole kinase (265 aa).

M55 lines the substrate pocket. Residues R130 and S176 each coordinate ATP. G203 contributes to the substrate binding site.

It belongs to the Thz kinase family. Mg(2+) serves as cofactor.

The catalysed reaction is 5-(2-hydroxyethyl)-4-methylthiazole + ATP = 4-methyl-5-(2-phosphooxyethyl)-thiazole + ADP + H(+). It functions in the pathway cofactor biosynthesis; thiamine diphosphate biosynthesis; 4-methyl-5-(2-phosphoethyl)-thiazole from 5-(2-hydroxyethyl)-4-methylthiazole: step 1/1. Catalyzes the phosphorylation of the hydroxyl group of 4-methyl-5-beta-hydroxyethylthiazole (THZ). The sequence is that of Hydroxyethylthiazole kinase from Leptospira interrogans serogroup Icterohaemorrhagiae serovar copenhageni (strain Fiocruz L1-130).